The sequence spans 621 residues: E3 SUMO-protein ligase PIAS2 (621 aa).

Positions 11–45 constitute an SAP domain; the sequence is VSSFRVSELQVLLGFAGRNKSGRKHDLLMRALHLL. The LXXLL motif motif lies at 19–23; the sequence is LQVLL. Glycyl lysine isopeptide (Lys-Gly) (interchain with G-Cter in SUMO2) cross-links involve residues K46 and K249. The 166-residue stretch at 134-299 folds into the PINIT domain; it reads QPSPPIPPVH…SMSVYLVRQL (166 aa). The SP-RING-type zinc-finger motif lies at 331 to 412; the sequence is PDSEIATTSL…FMEILNDCSD (82 aa). 4 residues coordinate Zn(2+): C362, H364, C385, and C388. Residues K430, K435, K443, and K452 each participate in a glycyl lysine isopeptide (Lys-Gly) (interchain with G-Cter in SUMO2) cross-link. Positions 467 to 473 are SUMO1-binding; the sequence is VDVIDLT. Phosphoserine occurs at positions 476, 477, and 478. The Nuclear localization signal signature appears at 484–492; the sequence is PPAKRKCIF. A Glycyl lysine isopeptide (Lys-Gly) (interchain with G-Cter in SUMO2) cross-link involves residue K489. S499 carries the phosphoserine modification. Residues K502 and Q562 each participate in a glycyl lysine isopeptide (Lys-Gly) (interchain with G-Cter in SUMO2) cross-link. The span at 579–610 shows a compositional bias: low complexity; sequence SSTSVTTTSSHESSTHVSSSSSRSETGVITSS. A disordered region spans residues 579–621; the sequence is SSTSVTTTSSHESSTHVSSSSSRSETGVITSSGSNIPDIISLD.

It belongs to the PIAS family. As to quaternary structure, binds SUMO1 and UBE2I. Interacts with AXIN1, JUN, MDM2, PARK7, TP53 and TP73 isoform alpha, but not TP73 isoform beta. Interacts with STAT4 following IL12 and IFN-alpha stimulation of T-cells. Interacts also with GTF2I, GTF2IRD1, IKFZ1, DAB2 and MSX2, as well as with several steroid receptors, including ESR1, ESR2, NR3C1, PGR, AR, and with NCOA2. Sumoylation of a target protein seems to enhance the interaction. Binds to sumoylated ELK1. Binds DNA, such as CDKN1A promoter, in a sequence-specific manner. Interacts with PLAG1. Interacts with KLF8; the interaction results in SUMO ligation and repression of KLF8 transcriptional activity and of its cell cycle progression into G(1) phase. PIAS2-beta interacts with IFIH1/MDA5. Isoform PIAS2-alpha interacts with PML (isoform PML-12). Interacts with PRDM1/Blimp-1. Post-translationally, sumoylated. As to expression, mainly expressed in testis. Isoform 3 is expressed predominantly in adult testis, weakly in pancreas, embryonic testis and sperm, and at very low levels in other organs.

It is found in the nucleus speckle. The protein resides in the nucleus. It localises to the PML body. It functions in the pathway protein modification; protein sumoylation. In terms of biological role, functions as an E3-type small ubiquitin-like modifier (SUMO) ligase, stabilizing the interaction between UBE2I and the substrate, and as a SUMO-tethering factor. Plays a crucial role as a transcriptional coregulator in various cellular pathways, including the STAT pathway, the p53 pathway and the steroid hormone signaling pathway. The effects of this transcriptional coregulation, transactivation or silencing may vary depending upon the biological context and the PIAS2 isoform studied. However, it seems to be mostly involved in gene silencing. Binds to sumoylated ELK1 and enhances its transcriptional activity by preventing recruitment of HDAC2 by ELK1, thus reversing SUMO-mediated repression of ELK1 transactivation activity. Isoform PIAS2-beta, but not isoform PIAS2-alpha, promotes MDM2 sumoylation. Isoform PIAS2-alpha promotes PARK7 sumoylation. Isoform PIAS2-beta promotes NCOA2 sumoylation more efficiently than isoform PIAS2-alpha. Isoform PIAS2-alpha sumoylates PML at'Lys-65' and 'Lys-160'. The chain is E3 SUMO-protein ligase PIAS2 (PIAS2) from Homo sapiens (Human).